A 376-amino-acid chain; its full sequence is Na(+)/H(+) antiporter NhaA (376 aa).

11 helical membrane-spanning segments follow: residues F8–L28, L49–L69, I87–F107, G117–G137, A140–V160, I162–I182, L209–I229, P248–A268, I270–G290, G321–F341, and E349–L369.

This sequence belongs to the NhaA Na(+)/H(+) (TC 2.A.33) antiporter family.

The protein localises to the cell inner membrane. The catalysed reaction is Na(+)(in) + 2 H(+)(out) = Na(+)(out) + 2 H(+)(in). Its function is as follows. Na(+)/H(+) antiporter that extrudes sodium in exchange for external protons. The polypeptide is Na(+)/H(+) antiporter NhaA (Rhizorhabdus wittichii (strain DSM 6014 / CCUG 31198 / JCM 15750 / NBRC 105917 / EY 4224 / RW1) (Sphingomonas wittichii)).